Here is a 484-residue protein sequence, read N- to C-terminus: ATP-dependent RNA helicase DDX25 (484 aa).

A Phosphothreonine modification is found at Thr49. The Nuclear export signal motif lies at 62–75 (LAANSLLNKLIRQS). The Q motif motif lies at 98–126 (KTFEELRLKEELLKGIYAMGFNRPSKIQE). The short motif at 101–115 (EELRLKEELLKGIYA) is the Nuclear localization signal element. The region spanning 131 to 301 (MMLAHPPQNL…ERIIPDPNVI (171 aa)) is the Helicase ATP-binding domain. ATP is bound at residue 144–151 (SQSGTGKT). The short motif at 248-251 (DEAD) is the DEAD box element. The Helicase C-terminal domain maps to 312 to 479 (NIRQYYVLCE…QLDPEDMDEI (168 aa)).

The protein belongs to the DEAD box helicase family. Post-translationally, phosphorylated on threonine residues. The phosphorylated form is found in the cytoplasm but not in the nucleus. As to expression, isoform 1 is expressed in germ cells. Isoform 2 is expressed in Leydig cells and in round spermatids of adult testis upon gonadotropin stimulation.

It localises to the cytoplasm. It is found in the nucleus. The enzyme catalyses ATP + H2O = ADP + phosphate + H(+). ATP-dependent RNA helicase. Required for mRNA export and translation regulation during spermatid development. The polypeptide is ATP-dependent RNA helicase DDX25 (Ddx25) (Mus musculus (Mouse)).